The following is a 71-amino-acid chain: Protein KleB (71 aa).

A DNA-binding region (H-T-H motif) is located at residues 9–28 (VTTNCRRCGKSISTLSRSLI).

The polypeptide is Protein KleB (kleB) (Escherichia coli).